The primary structure comprises 400 residues: Peptidase M20 domain-containing protein C757.05c (400 aa).

The signal sequence occupies residues 1 to 25; it reads MTMKISVWSLLIVIGYHLWMSPVLA. The N-linked (GlcNAc...) asparagine glycan is linked to asparagine 80. Aspartate 152 is a binding site for Zn(2+). The active-site Proton acceptor is the glutamate 186. Glutamate 187 is a Zn(2+) binding site.

It belongs to the peptidase M20A family. The cofactor is Zn(2+).

Its subcellular location is the secreted. This is Peptidase M20 domain-containing protein C757.05c from Schizosaccharomyces pombe (strain 972 / ATCC 24843) (Fission yeast).